The chain runs to 197 residues: Probable GTP-binding protein EngB (197 aa).

Residues 22-195 (ALPELALVGR…WQWIEERTGV (174 aa)) enclose the EngB-type G domain. GTP contacts are provided by residues 30–37 (GRSNVGKS), 57–61 (GKTQT), 75–78 (DVPG), 142–145 (TKVD), and 174–176 (FSA). Positions 37 and 59 each coordinate Mg(2+).

It belongs to the TRAFAC class TrmE-Era-EngA-EngB-Septin-like GTPase superfamily. EngB GTPase family. Requires Mg(2+) as cofactor.

Necessary for normal cell division and for the maintenance of normal septation. The chain is Probable GTP-binding protein EngB from Limosilactobacillus fermentum (strain NBRC 3956 / LMG 18251) (Lactobacillus fermentum).